We begin with the raw amino-acid sequence, 111 residues long: Nucleoid-associated protein Teth514_0034 (111 aa).

The protein belongs to the YbaB/EbfC family. Homodimer.

The protein localises to the cytoplasm. Its subcellular location is the nucleoid. In terms of biological role, binds to DNA and alters its conformation. May be involved in regulation of gene expression, nucleoid organization and DNA protection. The sequence is that of Nucleoid-associated protein Teth514_0034 from Thermoanaerobacter sp. (strain X514).